Consider the following 366-residue polypeptide: Dual-specificity RNA methyltransferase RlmN (366 aa).

Glu91 acts as the Proton acceptor in catalysis. One can recognise a Radical SAM core domain in the interval 97 to 333 (EDDRGTLCVS…TTVRKTRGED (237 aa)). A disulfide bridge links Cys104 with Cys338. Residues Cys111, Cys115, and Cys118 each coordinate [4Fe-4S] cluster. S-adenosyl-L-methionine is bound by residues 164–165 (GE), Ser196, 218–220 (SLH), and Asn295. The S-methylcysteine intermediate role is filled by Cys338.

Belongs to the radical SAM superfamily. RlmN family. [4Fe-4S] cluster is required as a cofactor.

It localises to the cytoplasm. The catalysed reaction is adenosine(2503) in 23S rRNA + 2 reduced [2Fe-2S]-[ferredoxin] + 2 S-adenosyl-L-methionine = 2-methyladenosine(2503) in 23S rRNA + 5'-deoxyadenosine + L-methionine + 2 oxidized [2Fe-2S]-[ferredoxin] + S-adenosyl-L-homocysteine. It catalyses the reaction adenosine(37) in tRNA + 2 reduced [2Fe-2S]-[ferredoxin] + 2 S-adenosyl-L-methionine = 2-methyladenosine(37) in tRNA + 5'-deoxyadenosine + L-methionine + 2 oxidized [2Fe-2S]-[ferredoxin] + S-adenosyl-L-homocysteine. Specifically methylates position 2 of adenine 2503 in 23S rRNA and position 2 of adenine 37 in tRNAs. m2A2503 modification seems to play a crucial role in the proofreading step occurring at the peptidyl transferase center and thus would serve to optimize ribosomal fidelity. This is Dual-specificity RNA methyltransferase RlmN from Laribacter hongkongensis (strain HLHK9).